The chain runs to 168 residues: Lipid transfer protein EARLI 1 (168 aa).

Residues 1-25 (MASKNSASIALFFALNIIFFTLTAA) form the signal peptide. Positions 32-81 (PSPKHKPVPSPKPKPVPSPKPKPVPSPSVPSPSVPSPNPRPVTPPRTPGS) are disordered. Residues 34-41 (PKHKPVPS) form an A-1 repeat. The 3 X 8 AA repeats A of P-K-[HP]-K-P-V-P-S stretch occupies residues 34 to 57 (PKHKPVPSPKPKPVPSPKPKPVPS). Over residues 39–78 (VPSPKPKPVPSPKPKPVPSPSVPSPSVPSPNPRPVTPPRT) the composition is skewed to pro residues. An A-2 repeat occupies 42–49 (PKPKPVPS). The stretch at 50–57 (PKPKPVPS) is one A-3 repeat. The B-1 repeat unit spans residues 58-62 (PSVPS). Residues 58-67 (PSVPSPSVPS) form a 2 X 58 AA tandem repeats B of P-S-V-P-S region. The stretch at 63 to 67 (PSVPS) is one B-2 repeat.

This sequence belongs to the plant LTP family. PEARLI1 subfamily. Mostly expressed in aerial part of seedlings, and, to a lower extent, in roots. Higher basal levels in early-flowering ecotypes.

The protein resides in the secreted. It localises to the cell wall. Functionally, probable lipid transfer protein (LTP). May improve freezing survival. Seems to control the flowering process and lignin synthesis. Has an auxiliary role for germinability and early seedling development under low temperature and salt stress conditions, probably in an abscisic acid- (ABA) dependent manner. Confers resistance to Botrytis cinerea and exhibits anti-fungal activity, at least against S.cerevisiae, B.cinerea and Fusarium oxysporum, probably by increasing their membrane permeability. This chain is Lipid transfer protein EARLI 1 (EARLI1), found in Arabidopsis thaliana (Mouse-ear cress).